The following is a 311-amino-acid chain: Formimidoylglutamase (311 aa).

Mn(2+)-binding residues include His-130, Asp-155, His-157, Asp-159, Cys-242, and Asp-244.

This sequence belongs to the arginase family. It depends on Mn(2+) as a cofactor.

The enzyme catalyses N-formimidoyl-L-glutamate + H2O = formamide + L-glutamate. It participates in amino-acid degradation; L-histidine degradation into L-glutamate; L-glutamate from N-formimidoyl-L-glutamate (hydrolase route): step 1/1. Functionally, catalyzes the conversion of N-formimidoyl-L-glutamate to L-glutamate and formamide. The polypeptide is Formimidoylglutamase (Staphylococcus epidermidis (strain ATCC 35984 / DSM 28319 / BCRC 17069 / CCUG 31568 / BM 3577 / RP62A)).